Here is a 66-residue protein sequence, read N- to C-terminus: Beta-toxin ChFII.9 (66 aa).

In terms of domain architecture, LCN-type CS-alpha/beta spans 1-66; the sequence is KEGYIVDYHT…VWPLPNKRCK (66 aa). Cystine bridges form between cysteine 12–cysteine 65, cysteine 16–cysteine 41, cysteine 25–cysteine 46, and cysteine 29–cysteine 48. Lysine amide is present on lysine 66.

As to expression, expressed by the venom gland.

The protein localises to the secreted. Its function is as follows. Beta toxins bind voltage independently at site-4 of sodium channels (Nav) and shift the activation voltage toward more negative potentials, thereby affecting sodium channel activation CC and promoting spontaneous and repetitive firing. This is Beta-toxin ChFII.9 from Centruroides hirsutipalpus (Scorpion).